Consider the following 126-residue polypeptide: Late histone H2A.3, gonadal (126 aa).

Over residues 1–18 (MSGRGKGAKAKGKAKSRS) the composition is skewed to basic residues. The disordered stretch occupies residues 1–21 (MSGRGKGAKAKGKAKSRSSRA). Residue S2 is modified to N-acetylserine. Position 2 is a phosphoserine (S2). Residue Q104 is modified to N5-methylglutamine. K119 is covalently cross-linked (Glycyl lysine isopeptide (Lys-Gly) (interchain with G-Cter in ubiquitin)).

Belongs to the histone H2A family. The nucleosome is a histone octamer containing two molecules each of H2A, H2B, H3 and H4 assembled in one H3-H4 heterotetramer and two H2A-H2B heterodimers. The octamer wraps approximately 147 bp of DNA. Post-translationally, monoubiquitination of Lys-119 gives a specific tag for epigenetic transcriptional repression. Phosphorylation of Ser-2 directly represses transcription.

It is found in the nucleus. Its subcellular location is the chromosome. Core component of nucleosome. Nucleosomes wrap and compact DNA into chromatin, limiting DNA accessibility to the cellular machineries which require DNA as a template. Histones thereby play a central role in transcription regulation, DNA repair, DNA replication and chromosomal stability. DNA accessibility is regulated via a complex set of post-translational modifications of histones, also called histone code, and nucleosome remodeling. The sequence is that of Late histone H2A.3, gonadal from Psammechinus miliaris (Green sea urchin).